The primary structure comprises 612 residues: C4-dicarboxylate transport sensor protein DctB (612 aa).

2 helical membrane passes run 23–43 and 292–312; these read SLVI…YFAE and VLLI…LLTL. Positions 328-376 form a coiled coil; sequence KRQLEERVLERTRELENANAQLQQEVHEREQAQRELMRAQDEVVQAGKL. In terms of domain architecture, Histidine kinase spans 385-599; sequence SISHELNQPL…VVRLHLLPGV (215 aa). His-388 is modified (phosphohistidine; by autocatalysis).

Post-translationally, autophosphorylated.

It localises to the cell inner membrane. It catalyses the reaction ATP + protein L-histidine = ADP + protein N-phospho-L-histidine.. In terms of biological role, member of the two-component regulatory system DctB/DctD, which regulates C4-dicarboxylate transport via regulation of expression of the dctPQM operon and dctA. DctB functions as a membrane-associated protein kinase that phosphorylates DctD in response to environmental signals. The sequence is that of C4-dicarboxylate transport sensor protein DctB from Pseudomonas aeruginosa (strain ATCC 15692 / DSM 22644 / CIP 104116 / JCM 14847 / LMG 12228 / 1C / PRS 101 / PAO1).